Reading from the N-terminus, the 51-residue chain is Protein YrhD (51 aa).

The polypeptide is Protein YrhD (yrhD) (Escherichia coli (strain K12)).